Here is a 275-residue protein sequence, read N- to C-terminus: Taurine transport system permease protein TauC (275 aa).

Helical transmembrane passes span 20-42 (LSRQVTLSIGTLAVLLTVWWTVA), 87-107 (IMLALFAAVLFGIPVGIAMGL), 124-144 (PVPPLAYLPLMVIWFGIGETS), 146-166 (ILLIYLAIFAPVAMSALAGVK), 186-206 (VLWFVILPGALPEILTGLRIG), 209-229 (VGWSTLVAAELIAATRGLGFM), and 236-256 (FLATDVVLAGIAVIAIIAFLL). The region spanning 80 to 264 (LAASLTRIML…LLELGLRALQ (185 aa)) is the ABC transmembrane type-1 domain.

The protein belongs to the binding-protein-dependent transport system permease family. CysTW subfamily.

It localises to the cell inner membrane. Its function is as follows. Part of a binding-protein-dependent transport system for taurine. Probably responsible for the translocation of the substrate across the membrane. The polypeptide is Taurine transport system permease protein TauC (tauC) (Escherichia coli (strain K12)).